The chain runs to 712 residues: MSRSINLDELRKKALESKKKNEEDESNDSDKEDGEISEDDPVIDQSNSVPPMKVPTFPEQIPQLPPFDRFPGTNANFFPFGAPFMLPPALMFGPNTVPFFPQTASSNKTFSKRKRSSENSFNNRNKAKSSETSDSSNTSQSFKENRALKDTATSRPLALSSDTSYQKSEKAKSEKSPFLSTSKNSDANYSKTTNQKEAEKAVSQLFEVGVRFNDFIAEGIEPSVVHTLFLKLGLDSSSASSQGSLTLSADKAARSAKLRKIDSNLSDTHILPGDNGTPTVLPERKNLISLPLLKQDDWLSSSKPFGSSTPNVVIEFDSDDDGDDFSNSKIEQSNLEKPPSNSENGLTMSRSDYLALLRNKEEEIRRMTKLILRLESNKKPYRSPTSAADMKLPSVPVAAVDNKSKTHLDTFEKVVDLSSKADFVEAGPSISSSGASSSAATTNSDTTEQILEAPWLRKTEQIAVVHEEHPAQIKKSEIDILNNLIEKEEGELTKYQTLVKSKTEILTQLYTRKKQLLEQQGKGNVACLPKESDLSMDSITEVSAQADENSSQILSSKTSNAPNGTTETDFEDKVPLVDYISPFYRFKSYRFNQQFVERVPLKYRSLTYSNKIEPMKVFCKYETTGGVCNDDHCEASHFRDIKMTDDEIIQDLSRYIEGNDEIEKESYKSGLDIVMKNTDENTDFVDVATRIVEYHNLWKSERMTIPVAKVSI.

Positions M1–E22 are enriched in basic and acidic residues. Disordered regions lie at residues M1–P71, N107–Q195, and D323–M348. A coiled-coil region spans residues I5–E32. Residues E23–V42 are compositionally biased toward acidic residues. Positions S130–S141 are enriched in low complexity. 2 stretches are compositionally biased toward polar residues: residues F178–T193 and N327–M348. The stretch at S351–K379 forms a coiled coil. The interval P428–T447 is disordered. The stretch at A471–S501 forms a coiled coil. The segment covering Q545–E567 has biased composition (polar residues). The disordered stretch occupies residues Q545–T568. Residues F618–R639 form a C3H1-type zinc finger.

In terms of assembly, interacts with mmi1, pla1 and rrp6.

Its subcellular location is the nucleus. Promotes the exosome-mediated degradation of mRNAs containing a DSR (determinant of selective removal) signal sequence from mitotic cells. This is NURS complex subunit red1 from Schizosaccharomyces pombe (strain 972 / ATCC 24843) (Fission yeast).